Reading from the N-terminus, the 113-residue chain is Hydrogenase maturation factor HybF (113 aa).

The Ni(2+) site is built by His2 and Glu3. Positions 73, 76, 89, and 92 each coordinate Zn(2+).

It belongs to the HypA/HybF family. HybF subfamily.

Involved in the maturation of [NiFe] hydrogenases. Required for nickel insertion into the metal center of the hydrogenase. This is Hydrogenase maturation factor HybF from Morganella morganii (Proteus morganii).